Here is a 288-residue protein sequence, read N- to C-terminus: Serine/threonine-protein acetyltransferase YopJ (288 aa).

Catalysis depends on residues H109 and E128. Position 109 (H109) interacts with CoA. Position 167 to 168 (167 to 168 (RS)) interacts with CoA. C172 is a catalytic residue. 1D-myo-inositol hexakisphosphate is bound by residues 182-185 (KLYI) and 224-225 (KH). 227–230 (QGKK) contributes to the CoA binding site. R257 contacts 1D-myo-inositol hexakisphosphate. 266–270 (DGKEL) contacts CoA.

Belongs to the acetyltransferase YopJ family. The cofactor is 1D-myo-inositol hexakisphosphate.

It localises to the secreted. The enzyme catalyses L-threonyl-[protein] + acetyl-CoA = O-acetyl-L-threonyl-[protein] + CoA. The catalysed reaction is L-seryl-[protein] + acetyl-CoA = O-acetyl-L-seryl-[protein] + CoA. 1D-myo-inositol hexakisphosphate activates protein-acetyltransferase activity via an allosteric mechanism: 1D-myo-inositol hexakisphosphate-binding induces a conformational rearrangement that stimulates the interaction with acetyl-CoA. Serine/threonine-protein acetyltransferase translocated into infected cells, which inhibits the host immune response and induces cell death by mediating acetylation of target proteins. Inhibits the MAPK and NF-kappa-B signaling pathways by acetylating protein-kinases such as MAP2K1, MAP2K6, MAP3K7/TAK1 and I-kappa-B kinase (CHUK/IKKA and IKBKB) on serine and threonine residues critical for their activation by phosphorylation, thereby preventing protein-kinase activation. Promotes pyroptosis, a programmed cell death, in host cells by mediating acetylation of MAP3K7/TAK1: MAP3K7/TAK1 inactivation triggers activation of caspase-8 (CASP8), followed by CASP8-dependent cleavage of gasdermin-D (GSDMD) and induction of pyroptosis. This is Serine/threonine-protein acetyltransferase YopJ from Yersinia pestis.